Reading from the N-terminus, the 236-residue chain is Large ribosomal subunit protein uL1 (236 aa).

Belongs to the universal ribosomal protein uL1 family. In terms of assembly, part of the 50S ribosomal subunit.

Binds directly to 23S rRNA. The L1 stalk is quite mobile in the ribosome, and is involved in E site tRNA release. Functionally, protein L1 is also a translational repressor protein, it controls the translation of the L11 operon by binding to its mRNA. This is Large ribosomal subunit protein uL1 from Heliobacterium modesticaldum (strain ATCC 51547 / Ice1).